We begin with the raw amino-acid sequence, 126 residues long: NADH-quinone oxidoreductase subunit A (126 aa).

A run of 3 helical transmembrane segments spans residues 16–36 (ILVLLAMAIGLGLILIAAAAI), 73–93 (ILFIIFDLEVAFLFPWAVAFG), and 95–115 (MSMTAFWSMMVFLSVLTVGFA).

It belongs to the complex I subunit 3 family. In terms of assembly, NDH-1 is composed of 14 different subunits. Subunits NuoA, H, J, K, L, M, N constitute the membrane sector of the complex.

The protein localises to the cell inner membrane. It carries out the reaction a quinone + NADH + 5 H(+)(in) = a quinol + NAD(+) + 4 H(+)(out). Its function is as follows. NDH-1 shuttles electrons from NADH, via FMN and iron-sulfur (Fe-S) centers, to quinones in the respiratory chain. The immediate electron acceptor for the enzyme in this species is believed to be ubiquinone. Couples the redox reaction to proton translocation (for every two electrons transferred, four hydrogen ions are translocated across the cytoplasmic membrane), and thus conserves the redox energy in a proton gradient. The sequence is that of NADH-quinone oxidoreductase subunit A from Rhodobacter capsulatus (Rhodopseudomonas capsulata).